Consider the following 353-residue polypeptide: Probable cytochrome c oxidase subunit 2 (353 aa).

Residues 1–42 (MTARELVCSQRVGQGLSRRLRPLVLAVTLGVLVVTLSGCSWS) form the signal peptide. Helical transmembrane passes span 63-83 (LWIGAVVASLVVGVIVWGLIF) and 110-130 (LVLTVTPFLIISMLFYFTVIV). Cu cation-binding residues include His246, Cys287, Cys291, and His295.

It belongs to the cytochrome c oxidase subunit 2 family. The cofactor is Cu cation. Requires heme as cofactor.

The protein resides in the cell membrane. The enzyme catalyses 4 Fe(II)-[cytochrome c] + O2 + 8 H(+)(in) = 4 Fe(III)-[cytochrome c] + 2 H2O + 4 H(+)(out). Subunits I and II form the functional core of the enzyme complex. Electrons originating in cytochrome c are transferred via heme a and Cu(A) to the binuclear center formed by heme a3 and Cu(B). The sequence is that of Probable cytochrome c oxidase subunit 2 (ctaC) from Mycobacterium leprae (strain TN).